The primary structure comprises 443 residues: C4-dicarboxylate transport protein (443 aa).

9 helical membrane passes run 17–37 (PFYS…ILLG), 57–77 (LVKM…IAGM), 92–112 (LYFL…ANVV), 139–159 (EQSI…GAFA), 161–181 (GDIL…AMVG), 201–221 (LVGI…AFTI), 234–254 (MLIG…LGAV), 320–340 (IYMT…LSWG), and 368–388 (AATL…ILGI).

The protein belongs to the dicarboxylate/amino acid:cation symporter (DAACS) (TC 2.A.23) family.

It is found in the cell inner membrane. Its function is as follows. Responsible for the transport of dicarboxylates such as succinate, fumarate, and malate from the periplasm across the membrane. The chain is C4-dicarboxylate transport protein from Rhizobium etli (strain ATCC 51251 / DSM 11541 / JCM 21823 / NBRC 15573 / CFN 42).